The primary structure comprises 255 residues: Proteasome subunit alpha 2 (255 aa).

Positions 229 to 255 are disordered; sequence AGSSLEEMLPTPAATEDAPPANGDAPS. Low complexity predominate over residues 238–249; it reads PTPAATEDAPPA.

This sequence belongs to the peptidase T1A family. As to quaternary structure, the 20S proteasome core is composed of 14 alpha and 14 beta subunits that assemble into four stacked heptameric rings, resulting in a barrel-shaped structure. The two inner rings, each composed of seven catalytic beta subunits, are sandwiched by two outer rings, each composed of seven alpha subunits. All four combinations of alpha- and beta-subunits (beta2-alpha1, beta2-alpha2, beta1-alpha2 and beta1-alpha1) yield fully assembled and proteolytically active proteasomes. The catalytic chamber with the active sites is on the inside of the barrel. Has probably a gated structure, the ends of the cylinder being occluded by the N-termini of the alpha-subunits. Is likely capped by the proteasome-associated ATPase, ARC. The N-terminus is blocked.

It is found in the cytoplasm. Its pathway is protein degradation; proteasomal Pup-dependent pathway. The formation of the proteasomal ATPase ARC-20S proteasome complex, likely via the docking of the C-termini of ARC into the intersubunit pockets in the alpha-rings, may trigger opening of the gate for substrate entry. Interconversion between the open-gate and close-gate conformations leads to a dynamic regulation of the 20S proteasome proteolysis activity. Component of the proteasome core, a large protease complex with broad specificity involved in protein degradation. The R.erythropolis proteasomes are able to cleave oligopeptides after Tyr, Phe and Leu, very poorly after Arg but not after Glu. Thus, displays chymotrypsin-like activity, low trypsin-like activity but no caspase-like activity. This Rhodococcus erythropolis (Arthrobacter picolinophilus) protein is Proteasome subunit alpha 2.